The chain runs to 263 residues: Lens fiber major intrinsic protein (263 aa).

Residues 1–9 (MWELRSASF) are Cytoplasmic-facing. Residues 10–29 (WRAIFAEFFATLFYVFFGLG) form a helical membrane-spanning segment. Over 30–41 (ASLRWAPGPLHV) the chain is Extracellular. A helical transmembrane segment spans residues 42–59 (LQVALAFGLALATLVQAV). Residues 60 to 61 (GH) are Cytoplasmic-facing. An intramembrane region (discontinuously helical) is located at residues 62 to 77 (ISGAHVNPAVTFAFLV). An NPA 1 motif is present at residues 68-70 (NPA). Residues 78-82 (GSQMS) are Cytoplasmic-facing. Residues 83–106 (LLRAICYMAAQLLGAVAGAAVLYS) traverse the membrane as a helical segment. The Extracellular portion of the chain corresponds to 107–127 (VTPAAVRGNLALNTLHPGVSL). The helical transmembrane segment at 128 to 148 (GQATTVEIFLTLQFVLCIFAT) threads the bilayer. At 149 to 156 (YDERRNGR) the chain is on the cytoplasmic side. The chain crosses the membrane as a helical span at residues 157–175 (LGSVALAVGFSLTLGHLFG). Topologically, residues 176–178 (MYY) are extracellular. The segment at residues 179-193 (TGAGMNPARSFAPAI) is an intramembrane region (discontinuously helical). An NPA 2 motif is present at residues 184-186 (NPA). At 194–200 (LTRNFTN) the chain is on the extracellular side. Residues 201 to 222 (HWVYWVGPIIGGGLASLLYDFL) traverse the membrane as a helical segment. Over 223–263 (LFPRLKSVSERLSILKGARPSDSNGQPEGTGEPVELKTQAL) the chain is Cytoplasmic. An interaction with CALM region spans residues 227 to 237 (LKSVSERLSIL). Phosphoserine is present on residues S235, S243, and S245. The tract at residues 240–263 (ARPSDSNGQPEGTGEPVELKTQAL) is disordered. Residue N246 is modified to Deamidated asparagine.

It belongs to the MIP/aquaporin (TC 1.A.8) family. In terms of assembly, homotetramer; each monomer provides an independent water pore. Two homotetramers on opposing membranes can dimerize, forming a cell-cell junction. Interacts with CALM; the calcium-calmodulin/CALM complex interacts with the cytoplasmic domains of two aquaporins, leading to channel closure. Interacts with BFSP1 (via C-terminus); prevents calcium-dependent inhibition of the water channel activity. Subject to partial proteolytic cleavage in the eye lens core. Partial proteolysis promotes interactions between tetramers from adjoining membranes. Post-translationally, fatty acylated at Met-1 and Lys-238. The acyl modifications, in decreasing order of ion abundance, are: oleoyl (C18:1) &gt; palmitoyl (C16:0) &gt; stearoyl (C18:0) &gt; eicosenoyl (C20:1) &gt; dihomo-gamma-linolenoyl (C20:3) &gt; palmitoleoyl (C16:1) &gt; eicosadienoyl (C20:2).

The protein localises to the cell membrane. It is found in the cell junction. The catalysed reaction is H2O(in) = H2O(out). The water channel activity is inhibited by calcium through calmodulin/CALM. In terms of biological role, aquaporins form homotetrameric transmembrane channels, with each monomer independently mediating water transport across the plasma membrane along its osmotic gradient. Specifically expressed in lens fiber cells, this aquaporin is crucial for maintaining lens water homeostasis and transparency. Beyond water permeability, it also acts as a cell-to-cell adhesion molecule, forming thin junctions between lens fiber cells that are essential for maintaining the ordered structure and transparency of the lens. This is Lens fiber major intrinsic protein from Oryctolagus cuniculus (Rabbit).